A 775-amino-acid polypeptide reads, in one-letter code: Mitochondrial 15S rRNA processing factor CCM1 (775 aa).

Residues 1-18 (MLRYARTVRFSQVGNSVR) constitute a mitochondrion transit peptide. The segment at 35–65 (HDRKSPSHSLSPISNLPNHNDSSTERARKTL) is disordered. The segment covering 41–55 (SHSLSPISNLPNHND) has biased composition (polar residues). Residues 56-65 (SSTERARKTL) show a composition bias toward basic and acidic residues. PPR repeat units lie at residues 289–323 (PKRTCEVMVQAYGKNGNINRIQDLLSEMKLHKIEI), 324–355 (SGMALTNILATCVYKARDHKQAVEIFDTMRFQ), 362–396 (GTRAYQDIIVSYVNNDDIEKAIDIYREMITEKIEP), 397–432 (NQQIMVALARGCASREAFKFKSWDFIFEINRNNWTP), and 433–467 (TLPTYEYMLYLSSRDGDLALTRALYSRLLKDNTVS).

Belongs to the CCM1 family. As to quaternary structure, binds to mitochondrial small subunit 15S rRNA.

The protein resides in the mitochondrion. Regulates mitochondrial small subunit maturation by controlling 15S rRNA 5'-end processing. Localizes to the 5' precursor of the 15S rRNA in a position that is subsequently occupied by mS47 in the mature yeast mtSSU. Uses structure and sequence-specific RNA recognition, binding to a single-stranded region of the precursor and specifically recognizing bases -6 to -1. The exchange of Ccm1 for mS47 is coupled to the irreversible removal of precursor rRNA that is accompanied by conformational changes of the mitoribosomal proteins uS5m and mS26. These conformational changes signal completion of 5'-end rRNA processing through protection of the mature 5'-end of the 15S rRNA and stabilization of mS47. The removal of the 5' precursor together with the dissociation of Ccm1 may be catalyzed by the 5'-3' exoribonuclease Pet127. Involved in the specific removal of group I introns in mitochondrial encoded transcripts. The sequence is that of Mitochondrial 15S rRNA processing factor CCM1 (CCM1) from Scheffersomyces stipitis (strain ATCC 58785 / CBS 6054 / NBRC 10063 / NRRL Y-11545) (Yeast).